We begin with the raw amino-acid sequence, 247 residues long: Probable transcriptional regulatory protein Tola_2714 (247 aa).

The tract at residues 1-21 (MAGHSKWANIKHRKAAQDAKR) is disordered.

The protein belongs to the TACO1 family.

The protein localises to the cytoplasm. This chain is Probable transcriptional regulatory protein Tola_2714, found in Tolumonas auensis (strain DSM 9187 / NBRC 110442 / TA 4).